The primary structure comprises 442 residues: Septin-8 (442 aa).

At alanine 2 the chain carries N-acetylalanine. Serine 10 carries the phosphoserine modification. Residues 41 to 307 (QGFSFNILCV…ELYRRCKLEE (267 aa)) enclose the Septin-type G domain. The segment at 51-58 (GETGIGKS) is G1 motif. GTP is bound by residues 51–58 (GETGIGKS), glycine 106, 187–195 (KADTISKSE), glycine 241, and arginine 256. Residues 103 to 106 (DAVG) form a G3 motif region. The interval 186-189 (AKAD) is G4 motif. The stretch at 322–410 (LQETYEAKRK…RKAAVEALQS (89 aa)) forms a coiled coil. The segment covering 377–391 (HQEEKRKVEEKRREL) has biased composition (basic and acidic residues). Residues 377–442 (HQEEKRKVEE…WSSIYSVTIP (66 aa)) are disordered. Polar residues-rich tracts occupy residues 408–420 (LQSQ…SQQP) and 432–442 (GWSSIYSVTIP).

It belongs to the TRAFAC class TrmE-Era-EngA-EngB-Septin-like GTPase superfamily. Septin GTPase family. Septins polymerize into heterooligomeric protein complexes that form filaments, and can associate with cellular membranes, actin filaments and microtubules. GTPase activity is required for filament formation. Interacts with CDK14, SEPTIN4, SEPTIN5 and SEPTIN7. Interacts with VAMP2; the interaction inhibits interaction of VAMP2 with SYP. Interacts with STX1A.

The protein localises to the cytoplasm. It localises to the cytoskeleton. It is found in the synapse. Its subcellular location is the cell projection. The protein resides in the axon. The protein localises to the cytoplasmic vesicle. It localises to the secretory vesicle. It is found in the synaptic vesicle membrane. Its subcellular location is the presynapse. Functionally, filament-forming cytoskeletal GTPase. May play a role in platelet secretion. Seems to participate in the process of SNARE complex formation in synaptic vesicles. In Callithrix jacchus (White-tufted-ear marmoset), this protein is Septin-8.